The following is a 558-amino-acid chain: Magnesium-chelatase 60 kDa subunit (558 aa).

Disordered regions lie at residues 234–268 and 298–325; these read MPAS…GEEM and MARG…MGRL. The segment covering 240–254 has biased composition (acidic residues); sequence APPEPEPEPPEDQPD. Residues 298–308 are compositionally biased toward low complexity; it reads MARGATGTGSA. One can recognise a VWFA domain in the interval 376–555; that stretch reads VLIFAVDASG…HKLSNVLGAA (180 aa).

The protein belongs to the Mg-chelatase subunits D/I family.

It carries out the reaction protoporphyrin IX + Mg(2+) + ATP + H2O = Mg-protoporphyrin IX + ADP + phosphate + 3 H(+). It participates in porphyrin-containing compound metabolism; bacteriochlorophyll biosynthesis. Functionally, involved in bacteriochlorophyll biosynthesis; introduces a magnesium ion into protoporphyrin IX to yield Mg-protoporphyrin IX. This is Magnesium-chelatase 60 kDa subunit (bchD) from Cereibacter sphaeroides (strain ATCC 17023 / DSM 158 / JCM 6121 / CCUG 31486 / LMG 2827 / NBRC 12203 / NCIMB 8253 / ATH 2.4.1.) (Rhodobacter sphaeroides).